Reading from the N-terminus, the 247-residue chain is ATP synthase subunit a, chloroplastic (247 aa).

5 helical membrane-spanning segments follow: residues 38-58 (QVLI…IVTV), 95-115 (VPFI…GALL), 134-154 (INTT…AGLS), 199-219 (LVVV…VMFL), and 220-240 (GLFT…AYIG).

It belongs to the ATPase A chain family. In terms of assembly, F-type ATPases have 2 components, CF(1) - the catalytic core - and CF(0) - the membrane proton channel. CF(1) has five subunits: alpha(3), beta(3), gamma(1), delta(1), epsilon(1). CF(0) has four main subunits: a, b, b' and c.

The protein localises to the plastid. Its subcellular location is the chloroplast thylakoid membrane. Functionally, key component of the proton channel; it plays a direct role in the translocation of protons across the membrane. This chain is ATP synthase subunit a, chloroplastic, found in Populus trichocarpa (Western balsam poplar).